A 106-amino-acid chain; its full sequence is UPF0145 protein BF0270 (106 aa).

The protein belongs to the UPF0145 family.

This chain is UPF0145 protein BF0270, found in Bacteroides fragilis (strain YCH46).